Reading from the N-terminus, the 367-residue chain is tRNA-specific 2-thiouridylase MnmA (367 aa).

ATP-binding positions include 9-16 and Met35; that span reads GLSGGVDS. The tract at residues 95 to 97 is interaction with target base in tRNA; it reads NPD. Catalysis depends on Cys100, which acts as the Nucleophile. An intrachain disulfide couples Cys100 to Cys196. Residue Gly124 participates in ATP binding. Positions 146 to 148 are interaction with tRNA; the sequence is KDQ. Cys196 functions as the Cysteine persulfide intermediate in the catalytic mechanism. An interaction with tRNA region spans residues 308–309; that stretch reads RY.

The protein belongs to the MnmA/TRMU family.

It localises to the cytoplasm. It catalyses the reaction S-sulfanyl-L-cysteinyl-[protein] + uridine(34) in tRNA + AH2 + ATP = 2-thiouridine(34) in tRNA + L-cysteinyl-[protein] + A + AMP + diphosphate + H(+). Functionally, catalyzes the 2-thiolation of uridine at the wobble position (U34) of tRNA, leading to the formation of s(2)U34. In Nitrosococcus oceani (strain ATCC 19707 / BCRC 17464 / JCM 30415 / NCIMB 11848 / C-107), this protein is tRNA-specific 2-thiouridylase MnmA.